A 482-amino-acid chain; its full sequence is E3 ubiquitin-protein ligase parkin (482 aa).

Residues 30 to 99 enclose the Ubiquitin-like domain; the sequence is LSIYVKTNTG…LGQQSVLHAI (70 aa). Residue S94 is modified to Phosphoserine; by Pink1. An RING-type 0; atypical zinc finger spans residues 157–246; it reads AHFFVHCSQC…SGGEKDFAAP (90 aa). 4 residues coordinate Zn(2+): C163, C166, C178, and C181. Position 187 is a phosphothreonine; by Pink1 (T187). Residues C208, C232, H235, C259, C262, C274, H278, C281, C284, C310, C314, C353, C358, C373, C377, C382, C385, H390, C394, C436, and C439 each contribute to the Zn(2+) site. The segment at 255-482 is TRIAD supradomain; the sequence is KNVPCLACTD…RDCMGAHWFG (228 aa). The RING-type 1 zinc-finger motif lies at 259–314; that stretch reads CLACTDVSDTVLVFPCASQHVTCIDCFRHYCRSRLGERQFMPHPDFGYTLPCPAGC. IBR-type zinc fingers lie at residues 334-394 and 432-473; these read DRYQ…IGEC and STKP…EWTR. The RING-type 2; atypical zinc finger occupies 436–467; it reads CPKCRTPTERDGGCMHMVCTRAGCGFEWCWVC. C449 is a catalytic residue. The Zn(2+) site is built by C454, C459, C464, C467, C475, and H479.

Belongs to the RBR family. Parkin subfamily. Forms an E3 ubiquitin ligase complex with E2 ubiquitin-conjugating enzymes. Interacts with Pink1. Interacts with Marf. Interacts with Paris. Interacts with septins Septin1 and pnut. Post-translationally, auto-ubiquitinates in an E2-dependent manner leading to its own degradation. In terms of processing, phosphorylated. Activation requires phosphorylation at Ser-94 by Pink1 and binding to Pink1-phosphorylated polyubiquitin chains. Phosphorylation at Thr-187 by Pink1 is also important for mitochondrial localization. As to expression, in oocytes, accumulates in early egg chambers where it is enriched until stages 9-10, localizing mainly to the posterior pole and anterior margin (at protein level). After stage 10 it is no longer detected in the oocyte (at protein level). In embryos, ubiquitously expressed in the early stages (stages 2 to 5) (at protein level). Expression levels decrease at later stages and becomes restricted to the brain and nerve cord from stage 9 (at protein level). Relatively higher levels of expression in the head compared to the body. Enriched in the dorsomedial (DM) dopaminergic neurons.

The protein localises to the mitochondrion. It is found in the cytoplasm. Its subcellular location is the cytosol. It catalyses the reaction [E2 ubiquitin-conjugating enzyme]-S-ubiquitinyl-L-cysteine + [acceptor protein]-L-lysine = [E2 ubiquitin-conjugating enzyme]-L-cysteine + [acceptor protein]-N(6)-ubiquitinyl-L-lysine.. The protein operates within protein modification; protein ubiquitination. Its activity is regulated as follows. In the autoinhibited state the side chain of Phe-481 inserts into a hydrophobic groove in RING-0, occluding the ubiquitin acceptor site Cys-449, whereas the REP repressor element binds RING-1 and blocks its E2-binding site. Activation of park requires 2 steps: (1) phosphorylation at Ser-94 by Pink1 and (2) binding to phosphorylated ubiquitin, leading to unlock repression of the catalytic Cys-449 by the RING-0 region via an allosteric mechanism and converting park to its fully-active form. According to another report, phosphorylation at Ser-94 by Pink1 is not essential for activation and only binding to phosphorylated ubiquitin is essential to unlock repression. Its function is as follows. E3 ubiquitin-protein ligase which accepts ubiquitin from E2 ubiquitin-conjugating enzymes in the form of a thioester and then directly transfers the ubiquitin to targeted substrates, such as Paris, Marf, Opa1, Miro, pnut, Septin1, Tom20 and porin. Mediates monoubiquitination as well as 'Lys-6', 'Lys-11', 'Lys-48'-linked and 'Lys-63'-linked polyubiquitination of substrates, depending on the context. Protects against mitochondrial dysfunction during cellular stress, by acting downstream of Pink1, to coordinate mitochondrial quality control mechanisms that remove and replace dysfunctional mitochondrial components. Depending on the severity of mitochondrial damage and/or dysfunction, activity ranges from preventing apoptosis and stimulating mitochondrial biogenesis to regulating mitochondrial dynamics and eliminating severely damaged mitochondria via mitophagy. Appears to be particularly important in maintaining the physiology and function of cells with high energy demands that are undergoing stress or altered metabolic environment, including spermatids, muscle cells and neurons such as the dopaminergic (DA) neurons. Activation and recruitment onto the outer membrane of damaged/dysfunctional mitochondria (OMM) requires Pink1-mediated phosphorylation of both park and ubiquitin. In depolarized mitochondria, mediates the decision between mitophagy or preventing apoptosis by inducing either the poly- or monoubiquitination of porin/VDAC; polyubiquitination of porin promotes mitophagy, while monoubiquitination of porin decreases mitochondrial calcium influx which ultimately inhibits apoptosis. When cellular stress results in irreversible mitochondrial damage, promotes the autophagic degradation of dysfunctional depolarized mitochondria (mitophagy) by promoting the ubiquitination of mitochondrial proteins. Preferentially assembles 'Lys-6'-, 'Lys-11'- and 'Lys-63'-linked polyubiquitin chains following mitochondrial damage, leading to mitophagy. In developing tissues, inhibits JNK-mediated apoptosis by negatively regulating bsk transcription. The Pink1-park pathway also promotes fission and/or inhibits fusion of damaged mitochondria by mediating the ubiquitination and subsequent degradation of proteins involved in mitochondrial fusion/fission such as Marf, Opa1 and fzo. This prevents the refusion of unhealthy mitochondria with the healthy mitochondrial network and/or initiates mitochondrial fragmentation facilitating their later engulfment by autophagosomes. Regulates motility of damaged mitochondria by phosphorylating Miro which likely promotes its park-dependent degradation by the proteasome; in motor neurons, this inhibits mitochondrial intracellular anterograde transport along the axons which probably increases the chance of the mitochondria being eliminated in the soma. The Pink1-park pathway is also involved in mitochondrial regeneration processes such as promoting mitochondrial biogenesis, activating localized mitochondrial repair, promoting selective turnover of mitochondrial proteins and initiating the mitochondrial import of endogenous proteins. Involved in mitochondrial biogenesis via the ubiquitination of transcriptional repressor Paris which leads to its subsequent proteasomal degradation and allows activation of the transcription factor srl. Promotes localized mitochondrial repair by activating the translation of specific nuclear-encoded mitochondrial RNAs (nc-mtRNAs) on the mitochondrial surface, including several key electron transport chain component nc-mtRNAs. This Drosophila melanogaster (Fruit fly) protein is E3 ubiquitin-protein ligase parkin.